Consider the following 543-residue polypeptide: CTP synthase (543 aa).

Residues 1 to 267 (MKQTKYIFVT…LSPIAEILDL (267 aa)) form an amidoligase domain region. Ser15 serves as a coordination point for CTP. Residue Ser15 coordinates UTP. Residues 16–21 (SLGKGI) and Asp73 each bind ATP. Positions 73 and 141 each coordinate Mg(2+). Residues 148 to 150 (DIE), 188 to 193 (KTKPTQ), and Lys224 contribute to the CTP site. UTP contacts are provided by residues 188–193 (KTKPTQ) and Lys224. One can recognise a Glutamine amidotransferase type-1 domain in the interval 292-543 (KIAFVGKYVD…IKAAINYEDN (252 aa)). Gly354 lines the L-glutamine pocket. The Nucleophile; for glutamine hydrolysis role is filled by Cys381. Residues 382 to 385 (LGMQ), Glu405, and Arg473 each bind L-glutamine. Residues His516 and Glu518 contribute to the active site.

This sequence belongs to the CTP synthase family. As to quaternary structure, homotetramer.

It catalyses the reaction UTP + L-glutamine + ATP + H2O = CTP + L-glutamate + ADP + phosphate + 2 H(+). The enzyme catalyses L-glutamine + H2O = L-glutamate + NH4(+). It carries out the reaction UTP + NH4(+) + ATP = CTP + ADP + phosphate + 2 H(+). It functions in the pathway pyrimidine metabolism; CTP biosynthesis via de novo pathway; CTP from UDP: step 2/2. Its activity is regulated as follows. Allosterically activated by GTP, when glutamine is the substrate; GTP has no effect on the reaction when ammonia is the substrate. The allosteric effector GTP functions by stabilizing the protein conformation that binds the tetrahedral intermediate(s) formed during glutamine hydrolysis. Inhibited by the product CTP, via allosteric rather than competitive inhibition. In terms of biological role, catalyzes the ATP-dependent amination of UTP to CTP with either L-glutamine or ammonia as the source of nitrogen. Regulates intracellular CTP levels through interactions with the four ribonucleotide triphosphates. The chain is CTP synthase from Campylobacter jejuni subsp. jejuni serotype O:6 (strain 81116 / NCTC 11828).